A 1407-amino-acid chain; its full sequence is Trichohyalin (1407 aa).

Residues 1 to 91 are S-100-like; sequence MSPLLKSIID…AQAAYYALGQ (91 aa). EF-hand domains follow at residues 23 to 48 and 49 to 84; these read CDGAVLKKKDLKILLDREFGAVLQRP and HDPETVDVMLELLDRDSDGLVGFDEFCLLIFKLAQA. The Ca(2+) site is built by Asp32, Asp62, Asp64, Asp66, and Glu73. Disordered regions lie at residues 148–172, 218–237, 362–471, 486–587, 1014–1033, 1062–1082, and 1313–1407; these read EEEEQRKKRERFEQHYSRQYRDKEQ, LREEEQQRRERREQHERALQ, REQA…EEEQ, EQLQ…ERER, REEERLRRQERDRKFREEER, KEEKQLRRQERDRKFREEEQQ, and EQFA…QYRP. Composition is skewed to basic and acidic residues over residues 362–381, 396–424, 447–471, and 554–587; these read REQARERGESLTRRWQRQLE, RRQEEQSLRQDQERRQRQERERELEEQAR, SLRERQLRAEERQEQEQRFREEEEQ, and QREKRRQEREREYREEEKLQREEDEKRRRQERER. Residues 1313–1376 show a composition bias toward basic and acidic residues; it reads EQFAREEKSR…FREDQSRRQV (64 aa).

The protein belongs to the S100-fused protein family. Homodimer. Substrate of transglutaminase. Some 200 arginines are probably converted to citrullines by peptidylarginine deimidase. As to expression, found in the hard keratinizing tissues such as the inner root sheath (IRS) of hair follicles and medulla, and in the filiform papillae of dorsal tongue epithelium.

Intermediate filament-associated protein that associates in regular arrays with keratin intermediate filaments (KIF) of the inner root sheath cells of the hair follicle and the granular layer of the epidermis. It later becomes cross-linked to KIF by isodipeptide bonds. It may serve as scaffold protein, together with involucrin, in the organization of the cell envelope or even anchor the cell envelope to the KIF network. It may be involved in its own calcium-dependent postsynthetic processing during terminal differentiation. This Oryctolagus cuniculus (Rabbit) protein is Trichohyalin (TCHH).